The chain runs to 282 residues: MSDFSMETLKNLRQQTGVGLTKCKEALEHAKGNLEDAVVYLRKLGLASAGKKEHRETKEGVIAALVDERGAALVEVNVETDFVANNSVFRAFVTGLLSDLLDHKLSDVEALARVMSSQEPSLSVEELKAVTMQTVGENIRISRALYTPVSSGQSVGIYSHGNGKAVAMVFLSGSENQEALAKDIAMHIVASQPQFLSKDSVPQEVLEREREVFSSQVAGKLQEVVEKITQGKFKAFFQEACLLEQAFIKDPEVTIQGLIDRAAKASGEPLKVEHFVFWKMGA.

The segment at 80 to 83 (TDFV) is involved in Mg(2+) ion dislocation from EF-Tu.

It belongs to the EF-Ts family.

The protein localises to the cytoplasm. In terms of biological role, associates with the EF-Tu.GDP complex and induces the exchange of GDP to GTP. It remains bound to the aminoacyl-tRNA.EF-Tu.GTP complex up to the GTP hydrolysis stage on the ribosome. The polypeptide is Elongation factor Ts (Chlamydia trachomatis serovar A (strain ATCC VR-571B / DSM 19440 / HAR-13)).